Here is a 270-residue protein sequence, read N- to C-terminus: Small ribosomal subunit protein eS1 (270 aa).

Disordered stretches follow at residues Met-1–Lys-20 and Gly-238–Val-270.

Belongs to the eukaryotic ribosomal protein eS1 family. As to quaternary structure, component of the small ribosomal subunit. Mature ribosomes consist of a small (40S) and a large (60S) subunit. The 40S subunit contains about 33 different proteins and 1 molecule of RNA (18S). The 60S subunit contains about 49 different proteins and 3 molecules of RNA (28S, 5.8S and 5S).

Its subcellular location is the cytoplasm. The chain is Small ribosomal subunit protein eS1 from Culex quinquefasciatus (Southern house mosquito).